A 689-amino-acid chain; its full sequence is Protein asunder (689 aa).

Residues Asn-521–Thr-550 adopt a coiled-coil conformation. Disordered stretches follow at residues Ser-591–Arg-619 and Gly-665–Ser-689. The span at Ser-599–Lys-614 shows a compositional bias: low complexity. Residues Leu-613–Arg-619 carry the Nuclear localization signal (NLS) motif.

Belongs to the Integrator subunit 13 family. As to quaternary structure, belongs to the multiprotein complex Integrator, at least composed of IntS1, IntS2, IntS3, IntS4, omd/IntS5, IntS6, defl/IntS7, IntS8, IntS9, IntS10, IntS11, IntS12, asun/IntS13, IntS14 and IntS15. The core complex associates with protein phosphatase 2A subunits mts/PP2A and Pp2A-29B, to form the Integrator-PP2A (INTAC) complex. Post-translationally, phosphorylated.

The protein localises to the nucleus. It is found in the cytoplasm. It localises to the perinuclear region. In terms of biological role, component of the integrator complex, a multiprotein complex that terminates RNA polymerase II (Pol II) transcription in the promoter-proximal region of genes. The integrator complex provides a quality checkpoint during transcription elongation by driving premature transcription termination of transcripts that are unfavorably configured for transcriptional elongation: the complex terminates transcription by (1) catalyzing dephosphorylation of the C-terminal domain (CTD) of Pol II subunit Polr2A/Rbp1 and Spt5, and (2) degrading the exiting nascent RNA transcript via endonuclease activity. The integrator complex is also involved in the 3'-end processing of the U7 snRNA, and also the spliceosomal snRNAs U1, U2, U4 and U5. The chain is Protein asunder (asun) from Drosophila sechellia (Fruit fly).